The chain runs to 408 residues: MSITPEVKSRGMKFAEEQLLKHGWTQGKGLGRKENGITQALRVTLKQDTYGVGHDPAKEFTNHWWNDLFNKTAANLVVETRQDGVQIRRLSKETTRQDHAKPNLLYQKFVKTATLTSSGEKPDKDWESCSDDDSQEPKPPNVLTDEMLLQACEGRTAHKAARLGITMKAKLARLEAQEQAFLAQLKGQDPGVPQLQSESKSPKKKKKKRKQKEEEEPTTTERSAEKYSEHTDESIRKSKKKKRQHQEERVTDEREGTAIENEEETIRTGGLGELKNREHVDRSFRKKKRRGQHHEERAELAVLDNEGGKVAVSEVGTEEAERRVYTHPCGRSKKRRQHEEEDLNTEDEEVEEALVDSGTREAESRSCSDQKRGRSKKKRRQYQEEEVLDGPGVNTAQKAKKKKQKKRD.

Residue Met1 is modified to N-acetylmethionine. Position 4 is a phosphothreonine (Thr4). The G-patch domain occupies 11 to 57 (GMKFAEEQLLKHGWTQGKGLGRKENGITQALRVTLKQDTYGVGHDPA). Residue Lys46 forms a Glycyl lysine isopeptide (Lys-Gly) (interchain with G-Cter in SUMO2) linkage. Thr116 is subject to Phosphothreonine. Disordered regions lie at residues 116–141 (TSSG…KPPN) and 187–408 (GQDP…KKRD). A phosphoserine mark is found at Ser128 and Ser130. Basic and acidic residues-rich tracts occupy residues 222 to 236 (RSAE…ESIR), 245 to 257 (HQEE…REGT), and 274 to 283 (LKNREHVDRS). Residues 340 to 354 (EEDLNTEDEEVEEAL) show a composition bias toward acidic residues. Positions 358-372 (GTREAESRSCSDQKR) are enriched in basic and acidic residues. Basic residues predominate over residues 398–408 (KAKKKKQKKRD).

The sequence is that of G patch domain-containing protein 4 (GPATCH4) from Bos taurus (Bovine).